Here is a 370-residue protein sequence, read N- to C-terminus: Probable G-protein coupled receptor 85 (370 aa).

Topologically, residues 1–25 (MANYSHAADNILQNLSPLTAFLKLT) are extracellular. N-linked (GlcNAc...) asparagine glycosylation occurs at Asn3. Residues 26 to 46 (SLGFIIGVSVVGNLLISILLA) form a helical membrane-spanning segment. Over 47–57 (KDKTLHRAPYY) the chain is Cytoplasmic. The chain crosses the membrane as a helical span at residues 58–78 (FLLDLCCSDILRSAICFPFVF). Residues 79–96 (NSVKNGSTWTYGTLTCKV) are Extracellular-facing. N-linked (GlcNAc...) asparagine glycosylation is present at Asn83. An intrachain disulfide couples Cys94 to Cys172. A helical membrane pass occupies residues 97 to 117 (IAFLGVLSCFHTAFMLFCISV). The Cytoplasmic segment spans residues 118–137 (TRYLAIAHHRFYTKRLTFWT). Residues 138-158 (CLAVICMVWTLSVAMAFPPVL) form a helical membrane-spanning segment. At 159–188 (DVGTYSFIREEDQCTFQHRSFRANDSLGFM) the chain is on the extracellular side. N-linked (GlcNAc...) asparagine glycosylation occurs at Asn182. The chain crosses the membrane as a helical span at residues 189 to 209 (LLLALILLATQLVYLKLIFFV). The Cytoplasmic portion of the chain corresponds to 210–286 (HDRRKMKPVQ…FKMEKRISRM (77 aa)). A helical transmembrane segment spans residues 287–307 (FYIMTFLFLTLWGPYLVACYW). Over 308–313 (RVFARG) the chain is Extracellular. A helical transmembrane segment spans residues 314-334 (PVVPGGFLTAAVWMSFAQAGI). Residues 335–370 (NPFVCIFSNRELRRCFSTTLLYCRKSRLPREPYCVI) lie on the Cytoplasmic side of the membrane.

Belongs to the G-protein coupled receptor 1 family. In terms of assembly, interacts with DLG4 and DLG3.

It is found in the cell membrane. The protein localises to the endoplasmic reticulum. In terms of biological role, orphan receptor. The protein is Probable G-protein coupled receptor 85 (GPR85) of Pongo abelii (Sumatran orangutan).